The following is a 745-amino-acid chain: Interleukin-17 receptor D (745 aa).

A signal peptide spans Met-1–Gly-26. Residues Gly-27–Arg-298 are Extracellular-facing. Residues Asn-61, Asn-79, Asn-136, Asn-170, Asn-205, and Asn-276 are each glycosylated (N-linked (GlcNAc...) asparagine). Residues Ala-299–Met-319 traverse the membrane as a helical segment. The Cytoplasmic portion of the chain corresponds to Cys-320 to Thr-745. The 165-residue stretch at Arg-354–Ala-518 folds into the SEFIR domain. 2 disordered regions span residues Arg-432 to Ser-454 and Arg-631 to Val-713. Residues Thr-439–Ser-448 are compositionally biased toward basic and acidic residues. A compositionally biased stretch (low complexity) spans Ser-693–Leu-705.

Interacts with fgfr1 and fgfr2.

It localises to the membrane. Feedback inhibitor of fibroblast growth factor mediated Ras-MAPK signaling and ERK activation. May inhibit FGF-induced FGFR1 tyrosine phosphorylation. This is Interleukin-17 receptor D (il17rd) from Danio rerio (Zebrafish).